A 160-amino-acid chain; its full sequence is 2-C-methyl-D-erythritol 2,4-cyclodiphosphate synthase (160 aa).

Residues Asp12 and His14 each coordinate a divalent metal cation. 4-CDP-2-C-methyl-D-erythritol 2-phosphate is bound by residues 12–14 (DVH) and 38–39 (HS). Residue His46 coordinates a divalent metal cation. 4-CDP-2-C-methyl-D-erythritol 2-phosphate contacts are provided by residues 60 to 62 (DIG), 65 to 69 (FPDTD), 136 to 139 (TTTE), Phe143, and Arg146.

It belongs to the IspF family. In terms of assembly, homotrimer. Requires a divalent metal cation as cofactor.

The catalysed reaction is 4-CDP-2-C-methyl-D-erythritol 2-phosphate = 2-C-methyl-D-erythritol 2,4-cyclic diphosphate + CMP. The protein operates within isoprenoid biosynthesis; isopentenyl diphosphate biosynthesis via DXP pathway; isopentenyl diphosphate from 1-deoxy-D-xylulose 5-phosphate: step 4/6. Involved in the biosynthesis of isopentenyl diphosphate (IPP) and dimethylallyl diphosphate (DMAPP), two major building blocks of isoprenoid compounds. Catalyzes the conversion of 4-diphosphocytidyl-2-C-methyl-D-erythritol 2-phosphate (CDP-ME2P) to 2-C-methyl-D-erythritol 2,4-cyclodiphosphate (ME-CPP) with a corresponding release of cytidine 5-monophosphate (CMP). This is 2-C-methyl-D-erythritol 2,4-cyclodiphosphate synthase from Acinetobacter baumannii (strain SDF).